Consider the following 113-residue polypeptide: Iron-sulfur cluster insertion protein ErpA (113 aa).

Iron-sulfur cluster is bound by residues Cys41, Cys105, and Cys107.

This sequence belongs to the HesB/IscA family. Homodimer. Iron-sulfur cluster is required as a cofactor.

Functionally, required for insertion of 4Fe-4S clusters for at least IspG. This chain is Iron-sulfur cluster insertion protein ErpA, found in Hydrogenovibrio crunogenus (strain DSM 25203 / XCL-2) (Thiomicrospira crunogena).